Here is a 326-residue protein sequence, read N- to C-terminus: Beta-ketoacyl-[acyl-carrier-protein] synthase III (326 aa).

Active-site residues include cysteine 112 and histidine 251. Positions 252–256 (QANSR) are ACP-binding. Asparagine 281 is a catalytic residue.

This sequence belongs to the thiolase-like superfamily. FabH family. In terms of assembly, homodimer.

The protein resides in the cytoplasm. The catalysed reaction is malonyl-[ACP] + acetyl-CoA + H(+) = 3-oxobutanoyl-[ACP] + CO2 + CoA. It participates in lipid metabolism; fatty acid biosynthesis. Its function is as follows. Catalyzes the condensation reaction of fatty acid synthesis by the addition to an acyl acceptor of two carbons from malonyl-ACP. Catalyzes the first condensation reaction which initiates fatty acid synthesis and may therefore play a role in governing the total rate of fatty acid production. Possesses both acetoacetyl-ACP synthase and acetyl transacylase activities. Its substrate specificity determines the biosynthesis of branched-chain and/or straight-chain of fatty acids. This is Beta-ketoacyl-[acyl-carrier-protein] synthase III from Clostridium botulinum (strain Okra / Type B1).